We begin with the raw amino-acid sequence, 291 residues long: Nucleotide-binding protein RALTA_A0325 (291 aa).

8 to 15 (GISGSGKS) contributes to the ATP binding site. 57–60 (DIRS) is a GTP binding site.

It belongs to the RapZ-like family.

Its function is as follows. Displays ATPase and GTPase activities. The protein is Nucleotide-binding protein RALTA_A0325 of Cupriavidus taiwanensis (strain DSM 17343 / BCRC 17206 / CCUG 44338 / CIP 107171 / LMG 19424 / R1) (Ralstonia taiwanensis (strain LMG 19424)).